We begin with the raw amino-acid sequence, 219 residues long: Thiamine-phosphate synthase (219 aa).

Residues 44–48 (QFREK) and Asn-79 each bind 4-amino-2-methyl-5-(diphosphooxymethyl)pyrimidine. Mg(2+) contacts are provided by Asp-80 and Asp-99. Ser-117 contributes to the 4-amino-2-methyl-5-(diphosphooxymethyl)pyrimidine binding site. 143-145 (TST) is a binding site for 2-[(2R,5Z)-2-carboxy-4-methylthiazol-5(2H)-ylidene]ethyl phosphate. Residue Lys-146 participates in 4-amino-2-methyl-5-(diphosphooxymethyl)pyrimidine binding. 2-[(2R,5Z)-2-carboxy-4-methylthiazol-5(2H)-ylidene]ethyl phosphate is bound by residues Gly-175 and 195-196 (IS).

This sequence belongs to the thiamine-phosphate synthase family. It depends on Mg(2+) as a cofactor.

It carries out the reaction 2-[(2R,5Z)-2-carboxy-4-methylthiazol-5(2H)-ylidene]ethyl phosphate + 4-amino-2-methyl-5-(diphosphooxymethyl)pyrimidine + 2 H(+) = thiamine phosphate + CO2 + diphosphate. The catalysed reaction is 2-(2-carboxy-4-methylthiazol-5-yl)ethyl phosphate + 4-amino-2-methyl-5-(diphosphooxymethyl)pyrimidine + 2 H(+) = thiamine phosphate + CO2 + diphosphate. The enzyme catalyses 4-methyl-5-(2-phosphooxyethyl)-thiazole + 4-amino-2-methyl-5-(diphosphooxymethyl)pyrimidine + H(+) = thiamine phosphate + diphosphate. Its pathway is cofactor biosynthesis; thiamine diphosphate biosynthesis; thiamine phosphate from 4-amino-2-methyl-5-diphosphomethylpyrimidine and 4-methyl-5-(2-phosphoethyl)-thiazole: step 1/1. Its function is as follows. Condenses 4-methyl-5-(beta-hydroxyethyl)thiazole monophosphate (THZ-P) and 2-methyl-4-amino-5-hydroxymethyl pyrimidine pyrophosphate (HMP-PP) to form thiamine monophosphate (TMP). The chain is Thiamine-phosphate synthase from Bacillus cereus (strain 03BB102).